The sequence spans 357 residues: MSAPTILIMAGGTGGHIMPGLAVAEVLRERGWRVLWLGNPDKMEGRLVPPRGIELVPLRFQGVRGRGAAALLKLPFLLARACAQAWRRLADIRPDVVLGMGGYVAFPGGVMAALRRMPLVVHEQNAVAGTANRWLARLARRVLSGFPGVLPRGEALGNPVRADLCALPEPAERYAGRSGALRVLVVGGSLGAHALNTTVPQALALLPEQARPQVVHQAGEQHLPALQQAYAQAGVQADCRAFIDDMAGAMAQADLLICRAGAMTVSEVAAAGVAALFVPFPHAIDDHQTANARFLSDAQAAWLQPQATLTPQWLAQWLGQRTRQELQAVAGRARTHALPRAAAHIADVCEQAARRAS.

UDP-N-acetyl-alpha-D-glucosamine contacts are provided by residues 13–15, N125, R161, S189, I243, and Q288; that span reads TGG.

This sequence belongs to the glycosyltransferase 28 family. MurG subfamily.

The protein localises to the cell inner membrane. The enzyme catalyses di-trans,octa-cis-undecaprenyl diphospho-N-acetyl-alpha-D-muramoyl-L-alanyl-D-glutamyl-meso-2,6-diaminopimeloyl-D-alanyl-D-alanine + UDP-N-acetyl-alpha-D-glucosamine = di-trans,octa-cis-undecaprenyl diphospho-[N-acetyl-alpha-D-glucosaminyl-(1-&gt;4)]-N-acetyl-alpha-D-muramoyl-L-alanyl-D-glutamyl-meso-2,6-diaminopimeloyl-D-alanyl-D-alanine + UDP + H(+). It functions in the pathway cell wall biogenesis; peptidoglycan biosynthesis. Its function is as follows. Cell wall formation. Catalyzes the transfer of a GlcNAc subunit on undecaprenyl-pyrophosphoryl-MurNAc-pentapeptide (lipid intermediate I) to form undecaprenyl-pyrophosphoryl-MurNAc-(pentapeptide)GlcNAc (lipid intermediate II). The sequence is that of UDP-N-acetylglucosamine--N-acetylmuramyl-(pentapeptide) pyrophosphoryl-undecaprenol N-acetylglucosamine transferase from Bordetella parapertussis (strain 12822 / ATCC BAA-587 / NCTC 13253).